Here is a 390-residue protein sequence, read N- to C-terminus: Putative cyclin-F2-1 (390 aa).

Residues 135–154 (YNGDDDAPAPDDSMASRPQL) are disordered.

The protein belongs to the cyclin family. Cyclin F subfamily.

In Oryza sativa subsp. japonica (Rice), this protein is Putative cyclin-F2-1 (CycF2-1).